A 628-amino-acid polypeptide reads, in one-letter code: MFNLMRLIHRSFSSSPTNYVLQTILPISQLCSNGRLQEALLEMAMLGPEMGFHGYDALLNACLDKRALRDGQRVHAHMIKTRYLPATYLRTRLLIFYGKCDCLEDARKVLDEMPEKNVVSWTAMISRYSQTGHSSEALTVFAEMMRSDGKPNEFTFATVLTSCIRASGLGLGKQIHGLIVKWNYDSHIFVGSSLLDMYAKAGQIKEAREIFECLPERDVVSCTAIIAGYAQLGLDEEALEMFHRLHSEGMSPNYVTYASLLTALSGLALLDHGKQAHCHVLRRELPFYAVLQNSLIDMYSKCGNLSYARRLFDNMPERTAISWNAMLVGYSKHGLGREVLELFRLMRDEKRVKPDAVTLLAVLSGCSHGRMEDTGLNIFDGMVAGEYGTKPGTEHYGCIVDMLGRAGRIDEAFEFIKRMPSKPTAGVLGSLLGACRVHLSVDIGESVGRRLIEIEPENAGNYVILSNLYASAGRWADVNNVRAMMMQKAVTKEPGRSWIQHEQTLHYFHANDRTHPRREEVLAKMKEISIKMKQAGYVPDLSCVLYDVDEEQKEKMLLGHSEKLALTFGLIATGEGIPIRVFKNLRICVDCHNFAKIFSKVFEREVSLRDKNRFHQIVDGICSCGDYW.

The transit peptide at 1-19 (MFNLMRLIHRSFSSSPTNY) directs the protein to the mitochondrion. PPR repeat units follow at residues 51–85 (GFHG…RYLP), 86–116 (ATYL…MPEK), 117–151 (NVVS…DGKP), 152–186 (NEFT…NYDS), 187–217 (HIFV…LPER), 218–252 (DVVS…GMSP), 253–287 (NYVT…ELPF), 288–318 (YAVL…MPER), 319–353 (TAIS…KRVK), 355–389 (DAVT…EYGT), and 392–422 (GTEH…MPSK). The segment at 427–502 (VLGSLLGACR…EPGRSWIQHE (76 aa)) is type E motif. The interval 503 to 533 (QTLHYFHANDRTHPRREEVLAKMKEISIKMK) is type E(+) motif. The interval 534–628 (QAGYVPDLSC…DGICSCGDYW (95 aa)) is type DYW motif.

The protein belongs to the PPR family. PCMP-H subfamily.

The protein resides in the mitochondrion. In Arabidopsis thaliana (Mouse-ear cress), this protein is Putative pentatricopeptide repeat-containing protein At3g13770, mitochondrial (PCMP-H85).